The sequence spans 844 residues: MGFLSKIVDGNKKEIKRLGKLADKVLALEEDTAILTDEEIREKTKSFQKELAEIEDVKKQNDYLDKILPEAYALVREGSKRVFNMIPYKVQVMGGIAIHKGDIAEMRTGEGKTLTATMPTYLNALAGRGVHVITVNEYLSSSQSEEMAELYNYLGLTVGLNLNSKSTEEKREAYAQDITYSTNNELGFDYLRDNMVNYAEERVMRPLHFAIIDEVDSILIDEARTPLIISGEAEKSTSLYTQANVFAKMLKAEDDYNYDEKTKAVHLTEQGADKAERMFKVDNLYDVQNVEVISHINTALRAHVTLQRDVDYMVVDGEVLIVDQFTGRTMPGRRFSEGLHQAIEAKEGVAIQNESKTMASITFQNYFRMYNKLAGMTGTAKTEEEEFRNIYNMTVTQIPTNKPVQRKDNSDLIYISQKGKFDAVVEDVVEKHKKGQPVLLGTVAVETSEYISNLLKKRGVRHDVLNAKNHEREAEIVSNAGQKGAVTIATNMAGRGTDIKLGDGVEELGGLAVIGTERHESRRIDDQLRGRSGRQGDRGDSRFYLSLQDELMVRFGSERLQKMMNRLGMDDSTPIESKMVSRAVESAQKRVEGNNFDARKRILEYDEVLRKQREIIYNERNEIIDSEESSQVVNAMLRSTLQRAINHFINEEDDNPDYTPFINYVNDVFLQEGDLQDTEIKGKDSEDIFEIVWSKIEKAYAQQQETLGDQMSEFERMILLRSIDTHWTDHIDTMDQLRQGIHLRSYAQQNPLRDYQNEGHELFDIMMQNIEEDTCKYILKSVVQFEDDVEREKSKSFGEAKHVTAEDGKEKAKPQPIVKGDQVGRNDPCPCGSGKKYKNCHGKA.

Residues Q91, 109–113, and D498 contribute to the ATP site; that span reads GEGKT. The segment covering 793 to 813 has biased composition (basic and acidic residues); sequence KSKSFGEAKHVTAEDGKEKAK. A disordered region spans residues 793-825; that stretch reads KSKSFGEAKHVTAEDGKEKAKPQPIVKGDQVGR. Residues C829, C831, C840, and H841 each contribute to the Zn(2+) site.

Belongs to the SecA family. Monomer and homodimer. Part of the essential Sec protein translocation apparatus which comprises SecA, SecYEG and auxiliary proteins SecDF. Other proteins may also be involved. Requires Zn(2+) as cofactor.

The protein localises to the cell membrane. The protein resides in the cytoplasm. It carries out the reaction ATP + H2O + cellular proteinSide 1 = ADP + phosphate + cellular proteinSide 2.. Functionally, part of the Sec protein translocase complex. Interacts with the SecYEG preprotein conducting channel. Has a central role in coupling the hydrolysis of ATP to the transfer of proteins into and across the cell membrane, serving as an ATP-driven molecular motor driving the stepwise translocation of polypeptide chains across the membrane. The protein is Protein translocase subunit SecA 1 of Staphylococcus epidermidis (strain ATCC 35984 / DSM 28319 / BCRC 17069 / CCUG 31568 / BM 3577 / RP62A).